Consider the following 310-residue polypeptide: Protoheme IX farnesyltransferase 2 (310 aa).

A run of 9 helical transmembrane segments spans residues 25-45 (PGIIFGNLISVAGGFLLAAKG), 49-69 (LVLMLASLVGLSLVVASGCAI), 87-107 (RVTVTGEIAVGNVLAFGLALG), 120-139 (ALALLFAVIGYIVYVGVYSL), 145-165 (SVYGTLVGSFSGAVPPVVGYC), 176-196 (AILLLMFSLWQMPHSYAIAIF), 220-240 (LHIVLYIAVFALVSALLPLAG), 242-262 (TGIAFMAVTCATSLWWLAMAL), and 277-297 (QVFGFSIITITALSVTMALDF).

It belongs to the UbiA prenyltransferase family. Protoheme IX farnesyltransferase subfamily.

Its subcellular location is the cell inner membrane. The enzyme catalyses heme b + (2E,6E)-farnesyl diphosphate + H2O = Fe(II)-heme o + diphosphate. Its pathway is porphyrin-containing compound metabolism; heme O biosynthesis; heme O from protoheme: step 1/1. Converts heme B (protoheme IX) to heme O by substitution of the vinyl group on carbon 2 of heme B porphyrin ring with a hydroxyethyl farnesyl side group. The sequence is that of Protoheme IX farnesyltransferase 2 from Shewanella baltica (strain OS185).